A 49-amino-acid chain; its full sequence is Large ribosomal subunit protein bL33 (49 aa).

Belongs to the bacterial ribosomal protein bL33 family.

This chain is Large ribosomal subunit protein bL33, found in Streptococcus suis (strain 98HAH33).